The chain runs to 256 residues: Leucyl/phenylalanyl-tRNA--protein transferase (256 aa).

Positions 232–256 are disordered; the sequence is DGCTGASRHGPGADMRRGDMSREST. The span at 245–256 shows a compositional bias: basic and acidic residues; sequence DMRRGDMSREST.

Belongs to the L/F-transferase family.

It is found in the cytoplasm. The catalysed reaction is N-terminal L-lysyl-[protein] + L-leucyl-tRNA(Leu) = N-terminal L-leucyl-L-lysyl-[protein] + tRNA(Leu) + H(+). The enzyme catalyses N-terminal L-arginyl-[protein] + L-leucyl-tRNA(Leu) = N-terminal L-leucyl-L-arginyl-[protein] + tRNA(Leu) + H(+). It carries out the reaction L-phenylalanyl-tRNA(Phe) + an N-terminal L-alpha-aminoacyl-[protein] = an N-terminal L-phenylalanyl-L-alpha-aminoacyl-[protein] + tRNA(Phe). In terms of biological role, functions in the N-end rule pathway of protein degradation where it conjugates Leu, Phe and, less efficiently, Met from aminoacyl-tRNAs to the N-termini of proteins containing an N-terminal arginine or lysine. This chain is Leucyl/phenylalanyl-tRNA--protein transferase, found in Chromohalobacter salexigens (strain ATCC BAA-138 / DSM 3043 / CIP 106854 / NCIMB 13768 / 1H11).